The primary structure comprises 187 residues: Holliday junction branch migration complex subunit RuvA (187 aa).

Positions 1-64 are domain I; the sequence is MIEYIRGIIE…EDGFQIFGFK (64 aa). The interval 65–136 is domain II; the sequence is RKEELELFEK…ELKDKVPKEV (72 aa). The interval 136 to 139 is flexible linker; sequence VVVP. The tract at residues 140 to 187 is domain III; that stretch reads KEDSLLNEALEALLALGYTKSEAIYALSDVNCESVEQAVKEALKKLAK.

Belongs to the RuvA family. In terms of assembly, homotetramer. Forms an RuvA(8)-RuvB(12)-Holliday junction (HJ) complex. HJ DNA is sandwiched between 2 RuvA tetramers; dsDNA enters through RuvA and exits via RuvB. An RuvB hexamer assembles on each DNA strand where it exits the tetramer. Each RuvB hexamer is contacted by two RuvA subunits (via domain III) on 2 adjacent RuvB subunits; this complex drives branch migration. In the full resolvosome a probable DNA-RuvA(4)-RuvB(12)-RuvC(2) complex forms which resolves the HJ.

The protein resides in the cytoplasm. Functionally, the RuvA-RuvB-RuvC complex processes Holliday junction (HJ) DNA during genetic recombination and DNA repair, while the RuvA-RuvB complex plays an important role in the rescue of blocked DNA replication forks via replication fork reversal (RFR). RuvA specifically binds to HJ cruciform DNA, conferring on it an open structure. The RuvB hexamer acts as an ATP-dependent pump, pulling dsDNA into and through the RuvAB complex. HJ branch migration allows RuvC to scan DNA until it finds its consensus sequence, where it cleaves and resolves the cruciform DNA. The polypeptide is Holliday junction branch migration complex subunit RuvA (Caldanaerobacter subterraneus subsp. tengcongensis (strain DSM 15242 / JCM 11007 / NBRC 100824 / MB4) (Thermoanaerobacter tengcongensis)).